The primary structure comprises 643 residues: Very long-chain fatty acid transport protein (643 aa).

Residues 1 to 15 lie on the Cytoplasmic side of the membrane; sequence MACMHQAQLYNDLEE. The helical transmembrane segment at 16–36 threads the bilayer; the sequence is LLTGPSVPIVAGAAGAAALTA. Residues 37-138 are Extracellular-facing; sequence YINAKYHIAH…AIDGGNSAEH (102 aa). Residues 139–159 form a helical membrane-spanning segment; that stretch reads LMLWLALDAIGAATSFLNWNL. Over 160 to 249 the chain is Cytoplasmic; it reads TGAGLIHCIK…TGLPKGVFIS (90 aa). 235 to 246 serves as a coordination point for ATP; it reads YTSGTTGLPKGV. An intramembrane segment occupies 250-318; the sequence is TGRELRTDWS…FWPEVVASEA (69 aa). The Cytoplasmic segment spans residues 319–643; it reads NIIQYVGELG…QGIVDKRIRL (325 aa). The short motif at 477–525 is the FACS element; that stretch reads DLWFKSGDMLRQDAEGRVYFVDRLGDTFRWKSENVSTNEVADVMGTFPQ.

Belongs to the ATP-dependent AMP-binding enzyme family.

The protein localises to the lipid droplet. The protein resides in the cell membrane. It is found in the peroxisome membrane. Its subcellular location is the peroxisome. It carries out the reaction a very long-chain fatty acid + ATP + CoA = a very long-chain fatty acyl-CoA + AMP + diphosphate. Functionally, acyl-CoA synthetase required for both the import of long chain fatty acids (LCFAs) (C14-C18) and the activation very long chain fatty acids (VLCFAs) (C20-C26) by esterification of the fatty acids into metabolically active CoA-thioesters for subsequent degradation or incorporation into phospholipids. The transport and fatty acyl-CoA synthetase activities are genetically separable and are thus independent activities. Esterifies VLCFAs in the peroxisome matrix. The VLCFAs are actively transported into peroxisomes by a PXA1-PXA2 heterodimeric transporter in the peroxisomal membrane. In Cochliobolus heterostrophus (Southern corn leaf blight fungus), this protein is Very long-chain fatty acid transport protein (FAT1).